Consider the following 145-residue polypeptide: Protein SprT-like (145 aa).

Residues 5-140 form the SprT-like domain; that stretch reads DYVREVSLAD…ACGRCHGRLI (136 aa). Residue His64 participates in Zn(2+) binding. The active site involves Glu65. His68 contacts Zn(2+).

This sequence belongs to the SprT family. The cofactor is Zn(2+).

The protein localises to the cytoplasm. The chain is Protein SprT-like from Streptococcus equi subsp. zooepidemicus (strain MGCS10565).